Reading from the N-terminus, the 365-residue chain is Flagellar P-ring protein (365 aa).

An N-terminal signal peptide occupies residues 1-20 (MKLPHFFVLAALVLSGAAHA).

It belongs to the FlgI family. The basal body constitutes a major portion of the flagellar organelle and consists of four rings (L,P,S, and M) mounted on a central rod.

It localises to the periplasm. The protein resides in the bacterial flagellum basal body. Assembles around the rod to form the L-ring and probably protects the motor/basal body from shearing forces during rotation. The chain is Flagellar P-ring protein from Thiobacillus denitrificans (strain ATCC 25259 / T1).